A 402-amino-acid chain; its full sequence is Beta-ketoacyl-[acyl-carrier-protein] synthase III B, chloroplastic (402 aa).

Active-site residues include Cys178, His328, and Asn358.

This sequence belongs to the thiolase-like superfamily. FabH family.

It localises to the plastid. The protein resides in the chloroplast. It catalyses the reaction malonyl-[ACP] + acetyl-CoA + H(+) = 3-oxobutanoyl-[ACP] + CO2 + CoA. The protein operates within lipid metabolism; fatty acid biosynthesis. Functionally, catalyzes the condensation reaction of fatty acid synthesis by the addition to an acyl acceptor of two carbons from malonyl-ACP. KAS III catalyzes the first condensation reaction which initiates fatty acid synthesis and may therefore play a role in governing the total rate of fatty acid production. Possesses both acetoacetyl-ACP synthase and acetyl transacylase activities. This is Beta-ketoacyl-[acyl-carrier-protein] synthase III B, chloroplastic (KAS3B) from Cuphea wrightii (Wright's waxweed).